We begin with the raw amino-acid sequence, 354 residues long: S-adenosylmethionine:tRNA ribosyltransferase-isomerase (354 aa).

The protein belongs to the QueA family. In terms of assembly, monomer.

The protein resides in the cytoplasm. It catalyses the reaction 7-aminomethyl-7-carbaguanosine(34) in tRNA + S-adenosyl-L-methionine = epoxyqueuosine(34) in tRNA + adenine + L-methionine + 2 H(+). It functions in the pathway tRNA modification; tRNA-queuosine biosynthesis. Functionally, transfers and isomerizes the ribose moiety from AdoMet to the 7-aminomethyl group of 7-deazaguanine (preQ1-tRNA) to give epoxyqueuosine (oQ-tRNA). The polypeptide is S-adenosylmethionine:tRNA ribosyltransferase-isomerase (Pseudomonas fluorescens (strain ATCC BAA-477 / NRRL B-23932 / Pf-5)).